Here is a 505-residue protein sequence, read N- to C-terminus: Trans-cinnamate 4-monooxygenase (505 aa).

A helical transmembrane segment spans residues 3–23 (LLLLEKTLLALFIAATIAITI). Residues 212–217 (RSRLAQ) and alanine 305 contribute to the (E)-cinnamate site. Residue cysteine 446 coordinates heme.

Belongs to the cytochrome P450 family. Heme serves as cofactor.

It is found in the membrane. The enzyme catalyses (E)-cinnamate + reduced [NADPH--hemoprotein reductase] + O2 = (E)-4-coumarate + oxidized [NADPH--hemoprotein reductase] + H2O + H(+). The protein operates within phenylpropanoid metabolism; trans-4-coumarate biosynthesis; trans-4-coumarate from trans-cinnamate: step 1/1. Catalyzes the first oxidative step of the phenylpropanoid pathway in higher plants by transforming trans-cinnamate into p-coumarate. The compounds formed by this pathway are essential components for lignification, pollination, and defense against ultraviolet light, predators and pathogens. The protein is Trans-cinnamate 4-monooxygenase (CYP73A19) of Cicer arietinum (Chickpea).